A 287-amino-acid polypeptide reads, in one-letter code: Cuticle collagen 38 (287 aa).

An N-terminal signal peptide occupies residues 1-19 (MSKYLVPVCASISLVAVFG). The interval 95–287 (QGCPPGPPGP…CPCPARAKKH (193 aa)) is disordered. The span at 98 to 107 (PPGPPGPPGL) shows a compositional bias: pro residues. 2 consecutive Collagen-like domains span residues 145–200 (QGPP…GSEG) and 215–273 (GQPG…SIGP). Residues 184–205 (TGEQGPQGEPGTEGSEGPTGQD) are compositionally biased toward low complexity. Positions 206 to 215 (GTIGGPGLPG) are enriched in gly residues. Low complexity predominate over residues 238-252 (DGEQGPQGPQGPDGQ).

It belongs to the cuticular collagen family. Collagen polypeptide chains are complexed within the cuticle by disulfide bonds and other types of covalent cross-links.

It is found in the nucleus. Probable cuticular collagen-like protein. Nematode cuticles are composed largely of collagen-like proteins. The cuticle functions both as an exoskeleton and as a barrier to protect the worm from its environment. Acts downstream of the Wnt signaling pathway, perhaps in the formation of the adult cuticle. This chain is Cuticle collagen 38, found in Caenorhabditis elegans.